An 87-amino-acid chain; its full sequence is UPF0729 protein C18orf32 homolog (87 aa).

Belongs to the UPF0729 family.

The sequence is that of UPF0729 protein C18orf32 homolog from Esox lucius (Northern pike).